The chain runs to 141 residues: Nucleoside diphosphate kinase (141 aa).

Residues lysine 11, phenylalanine 59, arginine 87, threonine 93, arginine 104, and asparagine 114 each coordinate ATP. Histidine 117 serves as the catalytic Pros-phosphohistidine intermediate.

This sequence belongs to the NDK family. As to quaternary structure, homotetramer. Mg(2+) is required as a cofactor.

It is found in the cytoplasm. The catalysed reaction is a 2'-deoxyribonucleoside 5'-diphosphate + ATP = a 2'-deoxyribonucleoside 5'-triphosphate + ADP. It catalyses the reaction a ribonucleoside 5'-diphosphate + ATP = a ribonucleoside 5'-triphosphate + ADP. In terms of biological role, major role in the synthesis of nucleoside triphosphates other than ATP. The ATP gamma phosphate is transferred to the NDP beta phosphate via a ping-pong mechanism, using a phosphorylated active-site intermediate. The protein is Nucleoside diphosphate kinase of Cupriavidus necator (strain ATCC 17699 / DSM 428 / KCTC 22496 / NCIMB 10442 / H16 / Stanier 337) (Ralstonia eutropha).